The chain runs to 466 residues: Protein hob1 (466 aa).

The 253-residue stretch at 17 to 269 folds into the BAR domain; the sequence is LRSKFNVGEI…RGDVKDRAEA (253 aa). Coiled-coil stretches lie at residues 31-67 and 177-204; these read IYED…LNHQ and EKKL…LKEE. The tract at residues 280–342 is disordered; the sequence is PTYKRPGMGP…ASDYSTPSAG (63 aa). Positions 294 to 303 are enriched in low complexity; that stretch reads ATASSSSSFS. 4 positions are modified to phosphoserine: Ser-298, Ser-299, Ser-301, and Ser-303. The SH3 domain maps to 407–466; that stretch reads PAAEHVVALYDYAAQAAGDLSFHAGDRIEVVSRTDNQNEWWIGRLNGAQGQFPGNYVQLE.

Has a role in DNA damage signaling as a part of stress response processes. The polypeptide is Protein hob1 (hob1) (Schizosaccharomyces pombe (strain 972 / ATCC 24843) (Fission yeast)).